We begin with the raw amino-acid sequence, 96 residues long: UPF0213 protein Lreu_0682 (96 aa).

The GIY-YIG domain occupies 4–81; that stretch reads EKYYIYVLYC…KHQTRRQKEK (78 aa).

This sequence belongs to the UPF0213 family.

The polypeptide is UPF0213 protein Lreu_0682 (Limosilactobacillus reuteri (strain DSM 20016) (Lactobacillus reuteri)).